A 396-amino-acid chain; its full sequence is Growth-regulating factor 1 (396 aa).

The 36-residue stretch at 18–53 (PFTASQWQELEHQALIYKYMASGTPIPSDLILPLRR) folds into the QLQ domain. 2 consecutive short sequence motifs (bipartite nuclear localization signal) follow at residues 86-105 (RKAE…KKWR) and 123-130 (RGKNRSRK). Residues 90 to 134 (DPEPGRCRRTDGKKWRCSKEAYPDSKYCEKHMHRGKNRSRKPVEM) form the WRC domain. A disordered region spans residues 117–176 (CEKHMHRGKNRSRKPVEMSLATPPPPSSSATSAASNSSAGVAPTTTTTSSPAPSYSRPAP). Over residues 120-129 (HMHRGKNRSR) the composition is skewed to basic residues. Over residues 144-174 (SSATSAASNSSAGVAPTTTTTSSPAPSYSRP) the composition is skewed to low complexity.

The protein belongs to the GRF family. In terms of tissue distribution, highly expressed in the intercalary meristem of the internode and in the shoot apex. Detected in the leaf primordia and emerging leaves in the uppermost node. Preferentially localized in the epidermis and in the tissues surrounding vascular bundles of the intercalary meristem of the internode and in adventitious roots of the second highest node. Low expression in the coleoptile and in the youngest leaf.

The protein localises to the nucleus. Transcription activator that plays a regulatory role in gibberellin-induced stem elongation. The chain is Growth-regulating factor 1 (GRF1) from Oryza sativa subsp. indica (Rice).